A 762-amino-acid polypeptide reads, in one-letter code: 5-methyltetrahydropteroyltriglutamate--homocysteine methyltransferase (762 aa).

5-methyltetrahydropteroyltri-L-glutamate contacts are provided by residues 17-20 (REWK) and lysine 111. L-homocysteine is bound by residues 435–437 (IGS) and glutamate 488. Residues 435 to 437 (IGS) and glutamate 488 each bind L-methionine. 5-methyltetrahydropteroyltri-L-glutamate is bound by residues 519–520 (RC) and tryptophan 565. An L-homocysteine-binding site is contributed by aspartate 603. Aspartate 603 provides a ligand contact to L-methionine. Glutamate 609 is a binding site for 5-methyltetrahydropteroyltri-L-glutamate. Histidine 645, cysteine 647, and glutamate 669 together coordinate Zn(2+). Histidine 698 serves as the catalytic Proton donor. Residue cysteine 730 participates in Zn(2+) binding.

Belongs to the vitamin-B12 independent methionine synthase family. Zn(2+) is required as a cofactor.

The enzyme catalyses 5-methyltetrahydropteroyltri-L-glutamate + L-homocysteine = tetrahydropteroyltri-L-glutamate + L-methionine. The protein operates within amino-acid biosynthesis; L-methionine biosynthesis via de novo pathway; L-methionine from L-homocysteine (MetE route): step 1/1. Its function is as follows. Catalyzes the transfer of a methyl group from 5-methyltetrahydrofolate to homocysteine resulting in methionine formation. The protein is 5-methyltetrahydropteroyltriglutamate--homocysteine methyltransferase of Bacillus cereus (strain AH820).